Consider the following 108-residue polypeptide: CDGSH iron-sulfur domain-containing protein 1 (108 aa).

The helical; Signal-anchor for type III membrane protein transmembrane segment at I14–Y31 threads the bilayer. The Cytoplasmic segment spans residues K32 to T108. K42 participates in a covalent cross-link: Glycyl lysine isopeptide (Lys-Gly) (interchain with G-Cter in ubiquitin). Catalysis depends on K55, which acts as the Schiff-base intermediate with pyridoxal 5'-phosphate. 2 positions are modified to N6-acetyllysine; alternate: K55 and K68. Residues K55 and K68 each participate in a glycyl lysine isopeptide (Lys-Gly) (interchain with G-Cter in ubiquitin); alternate cross-link. [2Fe-2S] cluster is bound by residues C72 and C74. Glycyl lysine isopeptide (Lys-Gly) (interchain with G-Cter in ubiquitin) cross-links involve residues K78 and K79. Residues C83 and H87 each contribute to the [2Fe-2S] cluster site. K89 participates in a covalent cross-link: Glycyl lysine isopeptide (Lys-Gly) (interchain with G-Cter in ubiquitin). K104 bears the N6-acetyllysine; alternate mark. K104 participates in a covalent cross-link: Glycyl lysine isopeptide (Lys-Gly) (interchain with G-Cter in ubiquitin); alternate. Glycyl lysine isopeptide (Lys-Gly) (interchain with G-Cter in ubiquitin) cross-links involve residues K105 and K106.

It belongs to the CISD protein family. As to quaternary structure, homodimer. [2Fe-2S] cluster is required as a cofactor. It depends on pyridoxal 5'-phosphate as a cofactor. In terms of processing, ubiquitinated by PRKN during mitophagy, leading to its degradation and enhancement of mitophagy. Deubiquitinated by USP30. In terms of tissue distribution, liver, adipose, skeletal muscle and heart (at protein level). Widely expressed. Expressed at the highest levels in the heart.

It localises to the mitochondrion outer membrane. The catalysed reaction is L-cysteine + 2-oxoglutarate = 2-oxo-3-sulfanylpropanoate + L-glutamate. Functionally, L-cysteine transaminase that catalyzes the reversible transfer of the amino group from L-cysteine to the alpha-keto acid 2-oxoglutarate to respectively form 2-oxo-3-sulfanylpropanoate and L-glutamate. The catalytic cycle occurs in the presence of pyridoxal 5'-phosphate (PLP) cofactor that facilitates transamination by initially forming an internal aldimine with the epsilon-amino group of active site Lys-55 residue on the enzyme (PLP-enzyme aldimine), subsequently displaced by formation of an external aldimine with the substrate amino group (PLP-L-cysteine aldimine). The external aldimine is further deprotonated to form a carbanion intermediate, which in the presence of 2-oxoglutarate regenerates PLP yielding final products 2-oxo-3-sulfanylpropanoate and L-glutamate. The proton transfer in carbanion intermediate is suggested to be controlled by the active site lysine residue, whereas PLP stabilizes carbanion structure through electron delocalization, also known as the electron sink effect. Plays a key role in regulating maximal capacity for electron transport and oxidative phosphorylation. May be involved in iron-sulfur cluster shuttling and/or in redox reactions. Can transfer the [2Fe-2S] cluster to an apo-acceptor protein only when in the oxidation state, likely serving as a redox sensor that regulates mitochondrial iron-sulfur cluster assembly and iron trafficking upon oxidative stress. The polypeptide is CDGSH iron-sulfur domain-containing protein 1 (Cisd1) (Mus musculus (Mouse)).